The sequence spans 165 residues: NADPH-dependent 7-cyano-7-deazaguanine reductase (165 aa).

The active-site Thioimide intermediate is Cys-56. Catalysis depends on Asp-63, which acts as the Proton donor. Substrate is bound by residues 78–80 (VES) and 97–98 (HE).

It belongs to the GTP cyclohydrolase I family. QueF type 1 subfamily.

The protein resides in the cytoplasm. It catalyses the reaction 7-aminomethyl-7-carbaguanine + 2 NADP(+) = 7-cyano-7-deazaguanine + 2 NADPH + 3 H(+). Its pathway is tRNA modification; tRNA-queuosine biosynthesis. In terms of biological role, catalyzes the NADPH-dependent reduction of 7-cyano-7-deazaguanine (preQ0) to 7-aminomethyl-7-deazaguanine (preQ1). This is NADPH-dependent 7-cyano-7-deazaguanine reductase from Bacillus anthracis (strain A0248).